We begin with the raw amino-acid sequence, 960 residues long: Phosphoenolpyruvate carboxylase 3 (960 aa).

Ser8 is modified (phosphoserine). Catalysis depends on residues His167 and Lys597.

The protein belongs to the PEPCase type 1 family. In terms of assembly, homotetramer. The cofactor is Mg(2+).

Its subcellular location is the cytoplasm. It carries out the reaction oxaloacetate + phosphate = phosphoenolpyruvate + hydrogencarbonate. The protein operates within photosynthesis; C4 acid pathway. By light-reversible phosphorylation. In terms of biological role, through the carboxylation of phosphoenolpyruvate (PEP) it forms oxaloacetate, a four-carbon dicarboxylic acid source for the tricarboxylic acid cycle. In Sorghum bicolor (Sorghum), this protein is Phosphoenolpyruvate carboxylase 3.